We begin with the raw amino-acid sequence, 128 residues long: MAYRKLGRTSSQRKAMLRDLTTDLLINESIVTTEARAKEIRKTVEKMITLGKRGDLHARRQAAAFVRNEIASENYDEATEKYTTTTALQKLFSEIAPRYAERNGGYTRILKTEPRRGDAAPMAIIELV.

This sequence belongs to the bacterial ribosomal protein bL17 family. As to quaternary structure, part of the 50S ribosomal subunit. Contacts protein L32.

The polypeptide is Large ribosomal subunit protein bL17 (Streptococcus sanguinis (strain SK36)).